The primary structure comprises 163 residues: Shikimate kinase (163 aa).

10–15 is a binding site for ATP; that stretch reads GVGKTT. Thr14 serves as a coordination point for Mg(2+). The substrate site is built by Asp28, Arg52, and Gly75. Position 116 (Arg116) interacts with ATP. Arg134 contacts substrate. ATP is bound at residue Arg151.

It belongs to the shikimate kinase family. As to quaternary structure, monomer. Mg(2+) is required as a cofactor.

It is found in the cytoplasm. The enzyme catalyses shikimate + ATP = 3-phosphoshikimate + ADP + H(+). The protein operates within metabolic intermediate biosynthesis; chorismate biosynthesis; chorismate from D-erythrose 4-phosphate and phosphoenolpyruvate: step 5/7. Functionally, catalyzes the specific phosphorylation of the 3-hydroxyl group of shikimic acid using ATP as a cosubstrate. The protein is Shikimate kinase of Streptococcus pyogenes serotype M12 (strain MGAS2096).